The primary structure comprises 505 residues: ATP synthase subunit alpha (505 aa).

169–176 serves as a coordination point for ATP; it reads GDRQTGKT.

Belongs to the ATPase alpha/beta chains family. As to quaternary structure, F-type ATPases have 2 components, CF(1) - the catalytic core - and CF(0) - the membrane proton channel. CF(1) has five subunits: alpha(3), beta(3), gamma(1), delta(1), epsilon(1). CF(0) has three main subunits: a(1), b(2) and c(9-12). The alpha and beta chains form an alternating ring which encloses part of the gamma chain. CF(1) is attached to CF(0) by a central stalk formed by the gamma and epsilon chains, while a peripheral stalk is formed by the delta and b chains.

The protein localises to the cell membrane. It catalyses the reaction ATP + H2O + 4 H(+)(in) = ADP + phosphate + 5 H(+)(out). Functionally, produces ATP from ADP in the presence of a proton gradient across the membrane. The alpha chain is a regulatory subunit. This Alkaliphilus oremlandii (strain OhILAs) (Clostridium oremlandii (strain OhILAs)) protein is ATP synthase subunit alpha.